The chain runs to 1098 residues: Trehalose synthase complex regulatory subunit TSL1 (1098 aa).

Phosphoserine is present on residues Ser-49, Ser-53, Ser-56, Ser-71, Ser-77, Ser-135, Ser-147, and Ser-161. Disordered stretches follow at residues 59–86 (APAPEQGVPPAISRSATRSPSAFNRASS), 129–168 (SVERFFSPSSNIPTDRIASPIQHEHDSGSRIASPIQQQQQ), and 192–244 (SQTS…PSIK). Polar residues predominate over residues 72-86 (RSATRSPSAFNRASS). 2 tandem repeats follow at residues 144-150 (RIASPIQ) and 158-164 (RIASPIQ). The segment at 144–164 (RIASPIQHEHDSGSRIASPIQ) is 2 X 7 AA repeats of R-I-A-S-P-I-Q. Residues 213–227 (RPTSAATSLVNRTKQ) are compositionally biased toward polar residues. Low complexity predominate over residues 228–242 (GSASSGSSGSSAPPS). Phosphoserine is present on Ser-229. Residue Thr-251 is modified to Phosphothreonine. The disordered stretch occupies residues 274–297 (ADISSSETSSQHNESDPDDLTTAP). Residue Ser-303 is modified to Phosphoserine. The segment at 320–812 (GGYSNKSKLK…FNQEGSKIFK (493 aa)) is TPS complex domain. Phosphothreonine is present on Thr-815. Residues 1000-1027 (SSGQITNIQTPSQQNPSDQEQQPPASPT) form a disordered region.

The protein in the C-terminal section; belongs to the glycosyltransferase 20 family. In terms of assembly, the trehalose synthase complex is composed of the two catalytic subunits TPS1 and TPS2, and at least one of the two regulatory subunits TPS3 or TSL1.

It localises to the cytoplasm. Regulatory subunit of the trehalose synthase complex that catalyzes the production of trehalose from glucose-6-phosphate and UDP-glucose in a two step process. May stabilize the trehalose synthase complex, and confer sensitivity to physiological concentrations of phosphate and to fructose 6-phosphate. This chain is Trehalose synthase complex regulatory subunit TSL1 (TSL1), found in Saccharomyces cerevisiae (strain ATCC 204508 / S288c) (Baker's yeast).